We begin with the raw amino-acid sequence, 84 residues long: Small ribosomal subunit protein uS17 (84 aa).

This sequence belongs to the universal ribosomal protein uS17 family. In terms of assembly, part of the 30S ribosomal subunit.

One of the primary rRNA binding proteins, it binds specifically to the 5'-end of 16S ribosomal RNA. In Blochmanniella pennsylvanica (strain BPEN), this protein is Small ribosomal subunit protein uS17.